Here is a 155-residue protein sequence, read N- to C-terminus: Ribosomal RNA large subunit methyltransferase H (155 aa).

Residues leucine 73, glycine 104, and 123–128 each bind S-adenosyl-L-methionine; that span reads LSPLTL.

The protein belongs to the RNA methyltransferase RlmH family. Homodimer.

Its subcellular location is the cytoplasm. It catalyses the reaction pseudouridine(1915) in 23S rRNA + S-adenosyl-L-methionine = N(3)-methylpseudouridine(1915) in 23S rRNA + S-adenosyl-L-homocysteine + H(+). Functionally, specifically methylates the pseudouridine at position 1915 (m3Psi1915) in 23S rRNA. The polypeptide is Ribosomal RNA large subunit methyltransferase H (Pseudomonas entomophila (strain L48)).